Reading from the N-terminus, the 600-residue chain is Estrogen receptor (600 aa).

Positions 1 to 189 are modulating (transactivation AF-1); mediates interaction with MACROD1; sequence MTMTLHTKAS…IMESAKETRY (189 aa). Ser-10 carries an O-linked (GlcNAc) serine glycan. Residues 35-47 form a required for interaction with NCOA1 region; sequence MERALGEVYVDNS. Positions 35-179 are interaction with DDX5; self-association; that stretch reads MERALGEVYV…LSSSSEKGNM (145 aa). Residues Ser-109 and Ser-111 each carry the phosphoserine; by CDK2 modification. The residue at position 123 (Ser-123) is a Phosphoserine. The interval 148–177 is disordered; the sequence is DTGPPAFYRSNSDNRRQNGRERLSSSSEKG. Positions 159-170 are enriched in basic and acidic residues; sequence SDNRRQNGRERL. Ser-172 is subject to Phosphoserine; by CK2. 2 consecutive NR C4-type zinc fingers follow at residues 190–210 and 226–250; these read CAVC…CEGC and CPAT…LRKC. Positions 190–255 form a DNA-binding region, nuclear receptor; sequence CAVCNDYASG…RLRKCYEVGM (66 aa). The segment at 190 to 315 is mediates interaction with DNTTIP2; sequence CAVCNDYASG…TKKNSPALSL (126 aa). Positions 256 to 315 are hinge; sequence MKGGIRKDRRGGRMLKHKRQRDDLEGRNEMGTSGDMRAANLWPSPLVIKHTKKNSPALSL. Arg-265 is modified (asymmetric dimethylarginine; by PRMT1). The tract at residues 267-600 is interaction with AKAP13; sequence GRMLKHKRQR…PEAEGFPNTI (334 aa). Residues 269–600 are self-association; sequence MLKHKRQRDD…PEAEGFPNTI (332 aa). In terms of domain architecture, NR LBD spans 316 to 552; sequence TADQMVSALL…DLLLEMLDAH (237 aa). Residues 316–600 form a transactivation AF-2 region; it reads TADQMVSALL…PEAEGFPNTI (285 aa). Positions 358 and 399 each coordinate 17beta-estradiol. Residue Cys-452 is the site of S-palmitoyl cysteine attachment. His-529 lines the 17beta-estradiol pocket. Position 542 is a phosphotyrosine; by Tyr-kinases (Tyr-542). The tract at residues 558-581 is disordered; sequence ASRMGVPPEEPSQSQLTTTSSTSA. The segment covering 569–581 has biased composition (low complexity); it reads SQSQLTTTSSTSA. The O-linked (GlcNAc) threonine glycan is linked to Thr-576.

It belongs to the nuclear hormone receptor family. NR3 subfamily. As to quaternary structure, interacts with BCAS3. Binds DNA as a homodimer. Can form a heterodimer with ESR2. Interacts with coactivator NCOA5. Interacts with PELP1, the interaction is enhanced by 17-beta-estradiol; the interaction increases ESR1 transcriptional activity. Interacts with NCOA7; the interaction is ligand-inducible. Interacts with AKAP13, CUEDC2, HEXIM1, KDM5A, MAP1S, SMARD1, and UBE1C. Interacts with MUC1; the interaction is stimulated by 7 beta-estradiol (E2) and enhances ESR1-mediated transcription. Interacts with DNTTIP2, and UIMC1. Interacts with KMT2D/MLL2. Interacts with ATAD2; the interaction is enhanced by estradiol. Interacts with KIF18A and LDB1. Interacts with RLIM (via its C-terminus). Interacts with MACROD1. Interacts with SH2D4A and PLCG. Interacts with SH2D4A; the interaction blocks binding to PLCG and inhibits estrogen-induced cell proliferation. Interacts with DYNLL1. Interacts with CCDC62; the interaction requires estradiol and appears to enhance the transcription of target genes. Interacts with NR2C1; the interaction prevents homodimerization of ESR1 and suppresses its transcriptional activity and cell growth. Interacts with DNAAF4. Interacts with PRMT2. Interacts with RBFOX2. Interacts with EP300; the interaction is estrogen-dependent and enhanced by CITED1. Interacts with CITED1; the interaction is estrogen-dependent. Interacts with FAM120B, FOXL2, PHB2 and SLC30A9. Interacts with coactivators NCOA3 and NCOA6. Interacts with STK3/MST2 only in the presence of SAV1 and vice-versa. Binds to CSNK1D. Interacts with NCOA2; NCOA2 can interact with ESR1 AF-1 and AF-2 domains simultaneously and mediate their transcriptional synergy. Interacts with DDX5. Interacts with NCOA1; the interaction seems to require a self-association of N-terminal and C-terminal regions. Interacts with ZNF366, DDX17, NFKB1, RELA, SP1 and SP3. Interacts with NRIP1. Interacts with GPER1; the interaction occurs in an estrogen-dependent manner. Interacts with TRIP4 (ufmylated); estrogen dependent. Interacts with LMTK3; the interaction phosphorylates ESR1 (in vitro) and protects it against proteasomal degradation. Interacts with CCAR2 (via N-terminus) in a ligand-independent manner. Interacts with ZFHX3. Interacts with SFR1 in a ligand-dependent and -independent manner. Interacts with DCAF13, LATS1 and DCAF1; regulates ESR1 ubiquitination and ubiquitin-mediated proteasomal degradation. Interacts (via DNA-binding domain) with POU4F2 (C-terminus); this interaction increases the estrogen receptor ESR1 transcriptional activity in a DNA- and ligand 17-beta-estradiol-independent manner. Interacts with ESRRB isoform 1. Interacts with UBE3A and WBP2. Interacts with GTF2B. Interacts with RBM39. In the absence of hormonal ligand, interacts with TACC1. Interacts with PI3KR1 or PI3KR2 and PTK2/FAK1. Interacts with SRC. Interacts with BAG1; the interaction is promoted in the absence of estradiol (17-beta-estradiol/E2). Interacts with and ubiquitinated by STUB1; the interaction is promoted in the absence of estradiol (17-beta-estradiol/E2). Interacts with NEDD8. Post-translationally, phosphorylated by cyclin A/CDK2 and CK1. Phosphorylation probably enhances transcriptional activity. Dephosphorylation at Ser-123 by PPP5C inhibits its transactivation activity. Phosphorylated by LMTK3 (in vitro). Ubiquitinated; regulated by LATS1 via DCAF1 it leads to ESR1 proteasomal degradation. Deubiquitinated by OTUB1. Ubiquitinated by STUB1/CHIP; in the CA1 hippocampal region following loss of endogenous circulating estradiol (17-beta-estradiol/E2). Ubiquitinated by UBR5, leading to its degradation: UBR5 specifically recognizes and binds ligand-bound ESR1 when it is not associated with coactivators (NCOAs). In presence of NCOAs, the UBR5-degron is not accessible, preventing its ubiquitination and degradation. In terms of processing, palmitoylated at Cys-452 by ZDHHC7 and ZDHHC21. This modification is required for plasma membrane targeting and for rapid intracellular signaling via ERK and AKT kinases and cAMP generation, but not for signaling mediated by the nuclear hormone receptor. Post-translationally, dimethylated by PRMT1 at Arg-265. The methylation may favor cytoplasmic localization. Demethylated by JMJD6 at Arg-265. As to expression, expressed in the CA1 region of the hippocampus, expression decreases with age (at protein level). Expressed in the uterus (at protein level).

It localises to the nucleus. Its subcellular location is the cytoplasm. It is found in the golgi apparatus. The protein localises to the cell membrane. Its function is as follows. Nuclear hormone receptor. The steroid hormones and their receptors are involved in the regulation of eukaryotic gene expression and affect cellular proliferation and differentiation in target tissues. Ligand-dependent nuclear transactivation involves either direct homodimer binding to a palindromic estrogen response element (ERE) sequence or association with other DNA-binding transcription factors, such as AP-1/c-Jun, c-Fos, ATF-2, Sp1 and Sp3, to mediate ERE-independent signaling. Ligand binding induces a conformational change allowing subsequent or combinatorial association with multiprotein coactivator complexes through LXXLL motifs of their respective components. Mutual transrepression occurs between the estrogen receptor (ER) and NF-kappa-B in a cell-type specific manner. Decreases NF-kappa-B DNA-binding activity and inhibits NF-kappa-B-mediated transcription from the IL6 promoter and displace RELA/p65 and associated coregulators from the promoter. Recruited to the NF-kappa-B response element of the CCL2 and IL8 promoters and can displace CREBBP. Present with NF-kappa-B components RELA/p65 and NFKB1/p50 on ERE sequences. Can also act synergistically with NF-kappa-B to activate transcription involving respective recruitment adjacent response elements; the function involves CREBBP. Can activate the transcriptional activity of TFF1. Also mediates membrane-initiated estrogen signaling involving various kinase cascades. Essential for MTA1-mediated transcriptional regulation of BRCA1 and BCAS3. Maintains neuronal survival in response to ischemic reperfusion injury when in the presence of circulating estradiol (17-beta-estradiol/E2). The sequence is that of Estrogen receptor (Esr1) from Rattus norvegicus (Rat).